We begin with the raw amino-acid sequence, 347 residues long: NADH-quinone oxidoreductase subunit H (347 aa).

9 helical membrane-spanning segments follow: residues 13–33 (IIMI…IAYV), 50–70 (PNVV…KFVF), 82–102 (AVFL…WAVV), 115–135 (VGIL…IMGG), 161–181 (IGFV…TDIV), 198–218 (FLDW…ISAL), 263–283 (CALT…IWIL), 286–306 (VPGI…FAMV), and 321–341 (LGWK…AFVL).

Belongs to the complex I subunit 1 family. NDH-1 is composed of 14 different subunits. Subunits NuoA, H, J, K, L, M, N constitute the membrane sector of the complex.

Its subcellular location is the cell inner membrane. It catalyses the reaction a quinone + NADH + 5 H(+)(in) = a quinol + NAD(+) + 4 H(+)(out). In terms of biological role, NDH-1 shuttles electrons from NADH, via FMN and iron-sulfur (Fe-S) centers, to quinones in the respiratory chain. The immediate electron acceptor for the enzyme in this species is believed to be ubiquinone. Couples the redox reaction to proton translocation (for every two electrons transferred, four hydrogen ions are translocated across the cytoplasmic membrane), and thus conserves the redox energy in a proton gradient. This subunit may bind ubiquinone. This chain is NADH-quinone oxidoreductase subunit H, found in Rhizobium johnstonii (strain DSM 114642 / LMG 32736 / 3841) (Rhizobium leguminosarum bv. viciae).